The following is a 129-amino-acid chain: KVFSKCELAHKLKAQEMDGFGGYSLANWVCMAEYESNFNTRAFNGKNANGSSDYGLFQLNNKWWCKDNKRSSSNACNIMCSKLLDENIDDDISCAKRVVRDPKGMSAWKAWVKHCKDKDLSEYLASCNL.

Residues 1–129 (KVFSKCELAH…LSEYLASCNL (129 aa)) form the C-type lysozyme domain. 4 disulfides stabilise this stretch: cysteine 6/cysteine 127, cysteine 30/cysteine 115, cysteine 65/cysteine 80, and cysteine 76/cysteine 94. Residues glutamate 35 and aspartate 53 contribute to the active site. Positions 82, 85, 87, 90, and 91 each coordinate Ca(2+).

The protein belongs to the glycosyl hydrolase 22 family. In terms of assembly, monomer. Ca(2+) is required as a cofactor.

The catalysed reaction is Hydrolysis of (1-&gt;4)-beta-linkages between N-acetylmuramic acid and N-acetyl-D-glucosamine residues in a peptidoglycan and between N-acetyl-D-glucosamine residues in chitodextrins.. Functionally, lysozymes have primarily a bacteriolytic function; those in tissues and body fluids are associated with the monocyte-macrophage system and enhance the activity of immunoagents. The polypeptide is Lysozyme C, milk isozyme (LYZ) (Equus caballus (Horse)).